We begin with the raw amino-acid sequence, 84 residues long: Small ribosomal subunit protein uS17 (84 aa).

The protein belongs to the universal ribosomal protein uS17 family. As to quaternary structure, part of the 30S ribosomal subunit.

Functionally, one of the primary rRNA binding proteins, it binds specifically to the 5'-end of 16S ribosomal RNA. The polypeptide is Small ribosomal subunit protein uS17 (Erwinia tasmaniensis (strain DSM 17950 / CFBP 7177 / CIP 109463 / NCPPB 4357 / Et1/99)).